We begin with the raw amino-acid sequence, 1253 residues long: Methionine synthase (1253 aa).

The 321-residue stretch at 6–326 folds into the Hcy-binding domain; the sequence is QDEIEAILRK…DHIREIAEAV (321 aa). Zn(2+)-binding residues include Cys248, Cys311, and Cys312. Positions 359 to 620 constitute a Pterin-binding domain; the sequence is FVNIGERCNV…IHKDLLQLCE (262 aa). (6S)-5,6,7,8-tetrahydrofolate-binding positions include 370-372, Asp437, Asn458, Asp525, Asn567, Arg573, and Arg579; that span reads GSR. One can recognise a B12-binding N-terminal domain in the interval 650 to 747; sequence QTDEWRNGSI…FMEKEREEAR (98 aa). Methylcob(III)alamin-binding positions include Glu697, 770-774, His773, Ser818, Thr822, and Ala874; that span reads GDVHD. Residues 760–895 form the B12-binding domain; sequence QGTIVLATVK…DENLRDDYFE (136 aa). The 343-residue stretch at 911–1253 folds into the AdoMet activation domain; that stretch reads SLKERKYVPL…LGPILGYDTD (343 aa). Residues Asp962, Arg1160, and 1215-1216 each bind S-adenosyl-L-methionine; that span reads YF. Thr1252 bears the Phosphothreonine mark.

Belongs to the vitamin-B12 dependent methionine synthase family. In terms of assembly, monomer. Dimer. Forms a multiprotein complex with MMACHC, MMADHC and MTRR. Methylcob(III)alamin serves as cofactor. It depends on Zn(2+) as a cofactor.

It localises to the cytoplasm. It catalyses the reaction (6S)-5-methyl-5,6,7,8-tetrahydrofolate + L-homocysteine = (6S)-5,6,7,8-tetrahydrofolate + L-methionine. It participates in amino-acid biosynthesis; L-methionine biosynthesis via de novo pathway; L-methionine from L-homocysteine (MetH route): step 1/1. In terms of biological role, catalyzes the transfer of a methyl group from methylcob(III)alamin (MeCbl) to homocysteine, yielding enzyme-bound cob(I)alamin and methionine in the cytosol. MeCbl is an active form of cobalamin (vitamin B12) used as a cofactor for methionine biosynthesis. Cob(I)alamin form is regenerated to MeCbl by a transfer of a methyl group from 5-methyltetrahydrofolate. The processing of cobalamin in the cytosol occurs in a multiprotein complex composed of at least MMACHC, MMADHC, MTRR (methionine synthase reductase) and MTR which may contribute to shuttle safely and efficiently cobalamin towards MTR in order to produce methionine. The chain is Methionine synthase from Mus musculus (Mouse).